A 110-amino-acid polypeptide reads, in one-letter code: Large ribosomal subunit protein uL22 (110 aa).

Belongs to the universal ribosomal protein uL22 family. As to quaternary structure, part of the 50S ribosomal subunit.

Its function is as follows. This protein binds specifically to 23S rRNA; its binding is stimulated by other ribosomal proteins, e.g. L4, L17, and L20. It is important during the early stages of 50S assembly. It makes multiple contacts with different domains of the 23S rRNA in the assembled 50S subunit and ribosome. Functionally, the globular domain of the protein is located near the polypeptide exit tunnel on the outside of the subunit, while an extended beta-hairpin is found that lines the wall of the exit tunnel in the center of the 70S ribosome. This Mannheimia succiniciproducens (strain KCTC 0769BP / MBEL55E) protein is Large ribosomal subunit protein uL22.